Reading from the N-terminus, the 352-residue chain is Selenide, water dikinase (352 aa).

The active site involves Cys-21. Residues Lys-24 and 51–53 (TND) contribute to the ATP site. Residue Asp-54 participates in Mg(2+) binding. Residues Asp-71, Asp-94, and 141–143 (GHS) each bind ATP. Asp-94 is a Mg(2+) binding site. Asp-231 provides a ligand contact to Mg(2+).

The protein belongs to the selenophosphate synthase 1 family. Class I subfamily. Homodimer. The cofactor is Mg(2+).

The catalysed reaction is hydrogenselenide + ATP + H2O = selenophosphate + AMP + phosphate + 2 H(+). Synthesizes selenophosphate from selenide and ATP. In Myxococcus xanthus (strain DK1622), this protein is Selenide, water dikinase.